Reading from the N-terminus, the 131-residue chain is uncharacterized protein (131 aa).

The stretch at 4-44 forms a coiled coil; the sequence is QKPEQDVNKKIEELEKKVQELQEQLEKTKQAVKTVASILDN.

This is an uncharacterized protein from Sulfolobus islandicus filamentous virus (isolate Iceland/Hveragerdi) (SIFV).